The sequence spans 185 residues: Ribosome-recycling factor (185 aa).

This sequence belongs to the RRF family.

It localises to the cytoplasm. Responsible for the release of ribosomes from messenger RNA at the termination of protein biosynthesis. May increase the efficiency of translation by recycling ribosomes from one round of translation to another. This is Ribosome-recycling factor from Wolbachia sp. subsp. Drosophila simulans (strain wRi).